Here is a 453-residue protein sequence, read N- to C-terminus: Zinc finger and BTB domain-containing protein 44 (453 aa).

Lys-4 participates in a covalent cross-link: Glycyl lysine isopeptide (Lys-Gly) (interchain with G-Cter in SUMO2). The 68-residue stretch at 31 to 98 folds into the BTB domain; that stretch reads CDITIRVQDR…AYTATLSINT (68 aa). Ser-135, Ser-159, Ser-161, Ser-165, Ser-191, Ser-194, and Ser-199 each carry phosphoserine. Thr-200 is subject to Phosphothreonine. Residues 241–265 form a disordered region; sequence QPEKAKQAENTRTLELPGPSEAGRR. Residue Lys-290 forms a Glycyl lysine isopeptide (Lys-Gly) (interchain with G-Cter in SUMO2) linkage. 2 disordered regions span residues 295-324 and 336-368; these read SDEEVHEEVSQPVSASQSSLSDQQTVPGSE and SSSIGSVDEGVTEGLPTLQSTSSTNAHADEDDR. Low complexity predominate over residues 304–318; sequence SQPVSASQSSLSDQQ. Positions 352 to 361 are enriched in polar residues; sequence TLQSTSSTNA. 2 C2H2-type zinc fingers span residues 399-421 and 427-449; these read FQCPTCGVRFTRIQNLKQHMLIH and FQCDCCGKKFTRAYSLKMHRLKH.

It is found in the nucleus. This chain is Zinc finger and BTB domain-containing protein 44 (Zbtb44), found in Rattus norvegicus (Rat).